We begin with the raw amino-acid sequence, 283 residues long: Mitochondrial outer membrane protein porin (283 aa).

It belongs to the eukaryotic mitochondrial porin family.

The protein resides in the mitochondrion outer membrane. In terms of biological role, forms a channel through the cell membrane that allows diffusion of small hydrophilic molecules. The channel adopts an open conformation at low or zero membrane potential and a closed conformation at potentials above 30-40 mV. The open state has a weak anion selectivity whereas the closed state is cation-selective. This chain is Mitochondrial outer membrane protein porin, found in Neurospora crassa (strain ATCC 24698 / 74-OR23-1A / CBS 708.71 / DSM 1257 / FGSC 987).